The following is a 432-amino-acid chain: Trigger factor (432 aa).

In terms of domain architecture, PPIase FKBP-type spans 161–246 (EDRVTIDFTG…LKKVEERELP (86 aa)).

This sequence belongs to the FKBP-type PPIase family. Tig subfamily.

The protein localises to the cytoplasm. It carries out the reaction [protein]-peptidylproline (omega=180) = [protein]-peptidylproline (omega=0). In terms of biological role, involved in protein export. Acts as a chaperone by maintaining the newly synthesized protein in an open conformation. Functions as a peptidyl-prolyl cis-trans isomerase. The polypeptide is Trigger factor (Citrobacter koseri (strain ATCC BAA-895 / CDC 4225-83 / SGSC4696)).